Reading from the N-terminus, the 395-residue chain is LIM/homeobox protein Lhx3 (395 aa).

LIM zinc-binding domains lie at Cys-28–Asp-78 and Cys-87–Asp-141. A DNA-binding region (homeobox) is located at residues Ala-154 to Lys-213. 2 disordered regions span residues Glu-209–Leu-325 and Gly-348–Phe-395. Residues Asp-257–Glu-276 are compositionally biased toward polar residues.

The protein resides in the nucleus. Its function is as follows. Transcription factor. Defines subclasses of motoneurons that segregate into columns in the spinal cord and select distinct axon pathways. Acts in conjunction with LIM-1, ISL-1 and ISL-2. The polypeptide is LIM/homeobox protein Lhx3 (LHX3) (Gallus gallus (Chicken)).